The primary structure comprises 124 residues: Small ribosomal subunit protein uS12 (124 aa).

At D89 the chain carries 3-methylthioaspartic acid.

This sequence belongs to the universal ribosomal protein uS12 family. Part of the 30S ribosomal subunit. Contacts proteins S8 and S17. May interact with IF1 in the 30S initiation complex.

In terms of biological role, with S4 and S5 plays an important role in translational accuracy. Its function is as follows. Interacts with and stabilizes bases of the 16S rRNA that are involved in tRNA selection in the A site and with the mRNA backbone. Located at the interface of the 30S and 50S subunits, it traverses the body of the 30S subunit contacting proteins on the other side and probably holding the rRNA structure together. The combined cluster of proteins S8, S12 and S17 appears to hold together the shoulder and platform of the 30S subunit. The chain is Small ribosomal subunit protein uS12 from Caldanaerobacter subterraneus subsp. tengcongensis (strain DSM 15242 / JCM 11007 / NBRC 100824 / MB4) (Thermoanaerobacter tengcongensis).